A 66-amino-acid polypeptide reads, in one-letter code: Conotoxin Bu1.4 (66 aa).

The signal sequence occupies residues 1–23 (MGMRMRMMFTVFLLVVLANTVVS). The propeptide occupies 24 to 46 (FPSDRDSDGADAEASDEPVEFER). The disordered stretch occupies residues 25–48 (PSDRDSDGADAEASDEPVEFERDE). Residues 32 to 42 (GADAEASDEPV) are compositionally biased toward acidic residues. Disulfide bonds link cysteine 51/cysteine 57 and cysteine 52/cysteine 62. Threonine 63 carries the post-translational modification Threonine amide.

Belongs to the conotoxin A superfamily. Expressed by the venom duct.

The protein localises to the secreted. The polypeptide is Conotoxin Bu1.4 (Conus bullatus (Bubble cone)).